Consider the following 79-residue polypeptide: Large ribosomal subunit protein uL24 (79 aa).

It belongs to the universal ribosomal protein uL24 family. As to quaternary structure, part of the 50S ribosomal subunit.

Its function is as follows. One of two assembly initiator proteins, it binds directly to the 5'-end of the 23S rRNA, where it nucleates assembly of the 50S subunit. In terms of biological role, one of the proteins that surrounds the polypeptide exit tunnel on the outside of the subunit. The protein is Large ribosomal subunit protein uL24 of Lactobacillus delbrueckii subsp. bulgaricus (strain ATCC BAA-365 / Lb-18).